Here is a 152-residue protein sequence, read N- to C-terminus: Protein IpgF (152 aa).

Residues 1 to 17 form the signal peptide; it reads MSRFVFILLCFIPHLGR.

This sequence belongs to the IagB/IpgF/P19 family.

In Shigella flexneri, this protein is Protein IpgF (ipgF).